Consider the following 101-residue polypeptide: Apolipoprotein C-II (101 aa).

The signal sequence occupies residues 1–22; sequence MGIRYLLVLVLVLLVLGCEVQG. The lipid binding stretch occupies residues 66–74; it reads TMDEKIREI. Residues 78 to 101 form a lipoprotein lipase cofactor region; the sequence is STAAVSTYAGIFTDQLLSMLKGDQ.

It belongs to the apolipoprotein C2 family. Post-translationally, proapolipoprotein C-II is synthesized as a sialic acid containing glycoprotein which is subsequently desialylated prior to its proteolytic processing. In terms of processing, proapolipoprotein C-II, the major form found in plasma undergoes proteolytic cleavage of its N-terminal hexapeptide to generate apolipoprotein C-II, which occurs as the minor form in plasma.

The protein localises to the secreted. In terms of biological role, component of chylomicrons, very low-density lipoproteins (VLDL), low-density lipoproteins (LDL), and high-density lipoproteins (HDL) in plasma. Plays an important role in lipoprotein metabolism as an activator of lipoprotein lipase. Both proapolipoprotein C-II and apolipoprotein C-II can activate lipoprotein lipase. This Leptonychotes weddellii (Weddell seal) protein is Apolipoprotein C-II (APOC2).